A 61-amino-acid polypeptide reads, in one-letter code: Double gene block protein 1 (61 aa).

The disordered stretch occupies residues 1–45; the sequence is MDIESEVPVVGKQMLAGNRGKQKTRRSVAKDAIRKPASDSTNGGN. The segment at 17–35 is RNA-binding; the sequence is GNRGKQKTRRSVAKDAIRK. The span at 28-37 shows a compositional bias: basic and acidic residues; it reads VAKDAIRKPA.

The protein belongs to the carmovirus double gene block protein 1 family. Homodimer.

In terms of biological role, cell-to-cell movement. Displays RNA-binding activity. This chain is Double gene block protein 1, found in Carnation mottle virus (CarMV).